We begin with the raw amino-acid sequence, 365 residues long: Peptide chain release factor 2 (365 aa).

Gln-251 carries the N5-methylglutamine modification.

This sequence belongs to the prokaryotic/mitochondrial release factor family. In terms of processing, methylated by PrmC. Methylation increases the termination efficiency of RF2.

It is found in the cytoplasm. Peptide chain release factor 2 directs the termination of translation in response to the peptide chain termination codons UGA and UAA. This is Peptide chain release factor 2 from Campylobacter jejuni subsp. doylei (strain ATCC BAA-1458 / RM4099 / 269.97).